The sequence spans 160 residues: RNA-binding protein 3 (160 aa).

The region spanning 6–84 (GKLFVGGLNF…RQIRVDHAGK (79 aa)) is the RRM domain. Residue R47 is modified to Omega-N-methylarginine. The interval 81 to 116 (HAGKSARGSRGGAFGSYERGRGYPRGGGDQGYGSGR) is disordered. The span at 103-114 (YPRGGGDQGYGS) shows a compositional bias: gly residues. An Asymmetric dimethylarginine; alternate modification is found at R105. Position 105 is a dimethylated arginine; alternate (R105). At R105 the chain carries Omega-N-methylarginine; alternate. An omega-N-methylarginine mark is found at R120 and R134. The interval 135 to 160 (SRDYGGRSQGGYDRYSGGNYRDNYDN) is disordered. S150 is modified (phosphoserine). Residue Y158 is modified to Phosphotyrosine.

In terms of assembly, interacts with RPL4. Associates with the 60S ribosomal subunits.

It is found in the nucleus. It localises to the cytoplasm. Its subcellular location is the cell projection. The protein localises to the dendrite. Its function is as follows. Cold-inducible mRNA binding protein that enhances global protein synthesis at both physiological and mild hypothermic temperatures. Reduces the relative abundance of microRNAs, when overexpressed. Enhances phosphorylation of translation initiation factors and active polysome formation. In Capra hircus (Goat), this protein is RNA-binding protein 3.